Here is a 229-residue protein sequence, read N- to C-terminus: PKHD-type hydroxylase BBta_3541 (229 aa).

The Fe2OG dioxygenase domain occupies 78-180 (QIFPPLFNRY…RVASFFWMQS (103 aa)). Residues H98, D100, and H161 each coordinate Fe cation. R171 serves as a coordination point for 2-oxoglutarate.

Fe(2+) is required as a cofactor. The cofactor is L-ascorbate.

This chain is PKHD-type hydroxylase BBta_3541, found in Bradyrhizobium sp. (strain BTAi1 / ATCC BAA-1182).